A 220-amino-acid chain; its full sequence is Large ribosomal subunit protein uL1 (220 aa).

Belongs to the universal ribosomal protein uL1 family. As to quaternary structure, part of the 50S ribosomal subunit.

Binds directly to 23S rRNA. The L1 stalk is quite mobile in the ribosome, and is involved in E site tRNA release. Its function is as follows. Protein L1 is also a translational repressor protein, it controls the translation of the L11 operon by binding to its mRNA. This chain is Large ribosomal subunit protein uL1, found in Ehrlichia ruminantium (strain Gardel).